Consider the following 765-residue polypeptide: Beta-glucosidase cel3A (765 aa).

An N-terminal signal peptide occupies residues 1 to 24; the sequence is MRWSSPTSSSLSLVALLLVAHVDA. N-linked (GlcNAc...) asparagine glycans are attached at residues asparagine 66, asparagine 124, asparagine 250, asparagine 304, asparagine 311, asparagine 349, asparagine 549, asparagine 588, asparagine 657, and asparagine 681.

The protein belongs to the glycosyl hydrolase 3 family.

The protein localises to the secreted. The catalysed reaction is Hydrolysis of terminal, non-reducing beta-D-glucosyl residues with release of beta-D-glucose.. It participates in glycan metabolism; cellulose degradation. In terms of biological role, beta-glucosidases are one of a number of cellulolytic enzymes involved in the degradation of cellulosic biomass. Catalyzes the last step releasing glucose from the inhibitory cellobiose. Shows higher activities on cellobiose and cellotriose but lower activities on laminarioligosaccharides and polymers. This chain is Beta-glucosidase cel3A, found in Pyricularia oryzae (strain 70-15 / ATCC MYA-4617 / FGSC 8958) (Rice blast fungus).